Reading from the N-terminus, the 264-residue chain is Alkaline ceramidase 1 (264 aa).

Over Met-1–Glu-27 the chain is Lumenal. Residues Asp-13, Trp-14, Glu-16, Asn-18, and Glu-27 each contribute to the Ca(2+) site. The helical transmembrane segment at Phe-28–Met-48 threads the bilayer. The Cytoplasmic portion of the chain corresponds to His-49–Arg-57. A helical transmembrane segment spans residues Tyr-58–Met-78. Residue His-77 participates in Zn(2+) binding. Topologically, residues Thr-79–Ser-81 are lumenal. A helical membrane pass occupies residues Phe-82–Ile-102. The Cytoplasmic segment spans residues Trp-103 to Gln-119. The helical transmembrane segment at Phe-120–Leu-137 threads the bilayer. Residue Arg-138 is a topological domain, lumenal. Residues Pro-139 to Gln-159 form a helical membrane-spanning segment. The Cytoplasmic segment spans residues Glu-160 to Ser-176. Residues Val-177 to Trp-197 traverse the membrane as a helical segment. Over Gln-198–His-206 the chain is Lumenal. Zn(2+) is bound by residues His-206 and His-210. The chain crosses the membrane as a helical span at residues Ser-207–Val-227. The Cytoplasmic segment spans residues Asp-228 to Cys-264.

This sequence belongs to the alkaline ceramidase family. It depends on Zn(2+) as a cofactor. In terms of tissue distribution, mainly expressed in epidermis.

It localises to the endoplasmic reticulum membrane. It carries out the reaction an N-acylsphing-4-enine + H2O = sphing-4-enine + a fatty acid. It catalyses the reaction N-tetracosanoyl-sphing-4-enine + H2O = tetracosanoate + sphing-4-enine. The enzyme catalyses an N-acylsphinganine + H2O = sphinganine + a fatty acid. The catalysed reaction is N-(9Z-octadecenoyl)-sphing-4-enine + H2O = sphing-4-enine + (9Z)-octadecenoate. It carries out the reaction N-(15Z-tetracosenoyl)-sphing-4-enine + H2O = (15Z)-tetracosenoate + sphing-4-enine. Its pathway is lipid metabolism; sphingolipid metabolism. With respect to regulation, inhibited by sphingosine. Activity is Ca(2+)-dependent. Endoplasmic reticulum ceramidase that catalyzes the hydrolysis of ceramides into sphingosine and free fatty acids at alkaline pH. Ceramides, sphingosine, and its phosphorylated form sphingosine-1-phosphate are bioactive lipids that mediate cellular signaling pathways regulating several biological processes including cell proliferation, apoptosis and differentiation. Exhibits a strong substrate specificity towards the natural stereoisomer of ceramides with D-erythro-sphingosine as a backbone and has a higher activity towards very long-chain unsaturated fatty acids like the C24:1-ceramide. May also hydrolyze dihydroceramides to produce dihydrosphingosine. ACER1 is a skin-specific ceramidase that regulates the levels of ceramides, sphingosine and sphingosine-1-phosphate in the epidermis, mediates the calcium-induced differentiation of epidermal keratinocytes and more generally plays an important role in skin homeostasis. This is Alkaline ceramidase 1 from Homo sapiens (Human).